Here is a 219-residue protein sequence, read N- to C-terminus: Deoxyribose-phosphate aldolase (219 aa).

D93 acts as the Proton donor/acceptor in catalysis. Catalysis depends on K154, which acts as the Schiff-base intermediate with acetaldehyde. The Proton donor/acceptor role is filled by K179.

This sequence belongs to the DeoC/FbaB aldolase family. DeoC type 1 subfamily.

It is found in the cytoplasm. The enzyme catalyses 2-deoxy-D-ribose 5-phosphate = D-glyceraldehyde 3-phosphate + acetaldehyde. It functions in the pathway carbohydrate degradation; 2-deoxy-D-ribose 1-phosphate degradation; D-glyceraldehyde 3-phosphate and acetaldehyde from 2-deoxy-alpha-D-ribose 1-phosphate: step 2/2. In terms of biological role, catalyzes a reversible aldol reaction between acetaldehyde and D-glyceraldehyde 3-phosphate to generate 2-deoxy-D-ribose 5-phosphate. This Haloquadratum walsbyi (strain DSM 16790 / HBSQ001) protein is Deoxyribose-phosphate aldolase.